The following is an 874-amino-acid chain: Leucine--tRNA ligase (874 aa).

The short motif at 43–53 is the 'HIGH' region element; the sequence is PYPSGRIHIGH. Positions 630–634 match the 'KMSKS' region motif; sequence KMSKS. Lys-633 provides a ligand contact to ATP.

It belongs to the class-I aminoacyl-tRNA synthetase family.

The protein resides in the cytoplasm. The enzyme catalyses tRNA(Leu) + L-leucine + ATP = L-leucyl-tRNA(Leu) + AMP + diphosphate. The sequence is that of Leucine--tRNA ligase from Bradyrhizobium diazoefficiens (strain JCM 10833 / BCRC 13528 / IAM 13628 / NBRC 14792 / USDA 110).